Reading from the N-terminus, the 466-residue chain is Asparagine--tRNA ligase (466 aa).

It belongs to the class-II aminoacyl-tRNA synthetase family. Homodimer.

The protein localises to the cytoplasm. It carries out the reaction tRNA(Asn) + L-asparagine + ATP = L-asparaginyl-tRNA(Asn) + AMP + diphosphate + H(+). This chain is Asparagine--tRNA ligase, found in Xylella fastidiosa (strain Temecula1 / ATCC 700964).